Reading from the N-terminus, the 292-residue chain is AKT-interacting protein (292 aa).

Over residues 1 to 11 (MNPLWSMSSGS) the composition is skewed to polar residues. Residues 1 to 64 (MNPLWSMSSG…SPAPAAQSTN (64 aa)) are disordered. Positions 14–23 (KRAEGEEKTL) are enriched in basic and acidic residues. At S30 the chain carries Phosphoserine. In terms of domain architecture, UBC core spans 74–222 (YLEYSLLAEF…VVDSVKVCTA (149 aa)).

The protein belongs to the ubiquitin-conjugating enzyme family. FTS subfamily. As to quaternary structure, component of the FTS/Hook/FHIP complex (FHF complex), composed of AKTIP/FTS, FHIP1B, and one or more members of the Hook family of proteins HOOK1, HOOK2, and HOOK3. Interacts directly with HOOK1, HOOK2 and HOOK3. The FHF complex associates with the homotypic vesicular sorting complex (the HOPS complex). Also interacts with AKT1. May interact with FHIP1A.

The protein resides in the cytoplasm. Its subcellular location is the cell membrane. Component of the FTS/Hook/FHIP complex (FHF complex). The FHF complex may function to promote vesicle trafficking and/or fusion via the homotypic vesicular protein sorting complex (the HOPS complex). Regulates apoptosis by enhancing phosphorylation and activation of AKT1. Increases release of TNFSF6 via the AKT1/GSK3B/NFATC1 signaling cascade. FHF complex promotes the distribution of AP-4 complex to the perinuclear area of the cell. In Rattus norvegicus (Rat), this protein is AKT-interacting protein (Aktip).